A 653-amino-acid chain; its full sequence is Splicing factor 1 (653 aa).

Disordered stretches follow at residues 1-44 (MATG…PPGL) and 65-94 (LRTG…GKRL). A2 bears the N-acetylalanine mark. S14 is modified (phosphoserine). Positions 15-19 (KKRKR) match the Nuclear localization signal motif. S20 carries the post-translational modification Phosphoserine; by PKG. Phosphoserine occurs at positions 80 and 82. Phosphotyrosine is present on Y87. S89 is subject to Phosphoserine. The 82-residue stretch at 141-222 (MIPQDEYPEI…ENVKKAVEQI (82 aa)) folds into the KH domain. Residues 277-296 (TVCTKCGGAGHIASDCKFQR) form a CCHC-type zinc finger. Disordered stretches follow at residues 325-584 (VPAS…APPP) and 611-653 (RIPP…GKAA). Residues 335 to 350 (PATTPLASAPRPAAPA) show a composition bias toward low complexity. A compositionally biased stretch (gly residues) spans 382 to 394 (MHGGGPGGPGGGP). 2 stretches are compositionally biased toward pro residues: residues 418–447 (NGPP…PPPM) and 470–499 (MPPP…PLPP). A compositionally biased stretch (low complexity) spans 515–534 (SSMASSTPLPWQQNTTTTTT). Residues 567–584 (VPLPPGVQPPLPPGAPPP) show a composition bias toward pro residues.

Belongs to the BBP/SF1 family. Binds U2AF2. Interacts with U1 snRNA. Interacts with RBM17. Binds EWSR1, FUS and TAF15. In terms of processing, phosphorylation on Ser-20 interferes with U2AF2 binding and spliceosome assembly. As to expression, detected at intermediate levels in spleen. Lower levels in heart, kidney, brain, liver, testis, bone marrow, adrenal gland, lymph nodes, pancreas and thymus.

The protein resides in the nucleus. Its function is as follows. Necessary for the ATP-dependent first step of spliceosome assembly. Binds to the intron branch point sequence (BPS) 5'-UACUAAC-3' of the pre-mRNA. May act as transcription repressor. This is Splicing factor 1 (Sf1) from Mus musculus (Mouse).